The following is a 192-amino-acid chain: Large ribosomal subunit protein bL9 (192 aa).

Positions A173–A192 are disordered. Positions F179 to A192 are enriched in acidic residues.

It belongs to the bacterial ribosomal protein bL9 family.

In terms of biological role, binds to the 23S rRNA. This is Large ribosomal subunit protein bL9 (rplI) from Rhizobium leguminosarum bv. trifolii.